Reading from the N-terminus, the 366-residue chain is Ribosomal RNA large subunit methyltransferase M (366 aa).

S-adenosyl-L-methionine-binding positions include Ser-188, 221 to 224, Asp-240, Asp-260, and Asp-277; that span reads CPGG. Lys-306 serves as the catalytic Proton acceptor.

Belongs to the class I-like SAM-binding methyltransferase superfamily. RNA methyltransferase RlmE family. RlmM subfamily. As to quaternary structure, monomer.

The protein resides in the cytoplasm. It catalyses the reaction cytidine(2498) in 23S rRNA + S-adenosyl-L-methionine = 2'-O-methylcytidine(2498) in 23S rRNA + S-adenosyl-L-homocysteine + H(+). In terms of biological role, catalyzes the 2'-O-methylation at nucleotide C2498 in 23S rRNA. The protein is Ribosomal RNA large subunit methyltransferase M of Salmonella agona (strain SL483).